A 181-amino-acid chain; its full sequence is ATP synthase subunit delta (181 aa).

This sequence belongs to the ATPase delta chain family. In terms of assembly, F-type ATPases have 2 components, F(1) - the catalytic core - and F(0) - the membrane proton channel. F(1) has five subunits: alpha(3), beta(3), gamma(1), delta(1), epsilon(1). F(0) has three main subunits: a(1), b(2) and c(10-14). The alpha and beta chains form an alternating ring which encloses part of the gamma chain. F(1) is attached to F(0) by a central stalk formed by the gamma and epsilon chains, while a peripheral stalk is formed by the delta and b chains.

Its subcellular location is the cell inner membrane. Functionally, f(1)F(0) ATP synthase produces ATP from ADP in the presence of a proton or sodium gradient. F-type ATPases consist of two structural domains, F(1) containing the extramembraneous catalytic core and F(0) containing the membrane proton channel, linked together by a central stalk and a peripheral stalk. During catalysis, ATP synthesis in the catalytic domain of F(1) is coupled via a rotary mechanism of the central stalk subunits to proton translocation. In terms of biological role, this protein is part of the stalk that links CF(0) to CF(1). It either transmits conformational changes from CF(0) to CF(1) or is implicated in proton conduction. The polypeptide is ATP synthase subunit delta (Aquifex aeolicus (strain VF5)).